The chain runs to 157 residues: Ribosome maturation factor RimP (157 aa).

The protein belongs to the RimP family.

Its subcellular location is the cytoplasm. Functionally, required for maturation of 30S ribosomal subunits. In Enterococcus faecalis (strain ATCC 700802 / V583), this protein is Ribosome maturation factor RimP.